The sequence spans 89 residues: Small ribosomal subunit protein bS20 (89 aa).

The segment covering 1–12 has biased composition (basic residues); the sequence is MANIKSAKKRAK. Residues 1–22 are disordered; that stretch reads MANIKSAKKRAKQTIVRNERNT.

It belongs to the bacterial ribosomal protein bS20 family.

Binds directly to 16S ribosomal RNA. This is Small ribosomal subunit protein bS20 from Xanthomonas oryzae pv. oryzae (strain KACC10331 / KXO85).